The following is a 171-amino-acid chain: 3-hydroxydecanoyl-[acyl-carrier-protein] dehydratase (171 aa).

H70 is an active-site residue.

Belongs to the thioester dehydratase family. FabA subfamily. As to quaternary structure, homodimer.

The protein localises to the cytoplasm. The catalysed reaction is a (3R)-hydroxyacyl-[ACP] = a (2E)-enoyl-[ACP] + H2O. It catalyses the reaction (3R)-hydroxydecanoyl-[ACP] = (2E)-decenoyl-[ACP] + H2O. The enzyme catalyses (2E)-decenoyl-[ACP] = (3Z)-decenoyl-[ACP]. It functions in the pathway lipid metabolism; fatty acid biosynthesis. Its function is as follows. Necessary for the introduction of cis unsaturation into fatty acids. Catalyzes the dehydration of (3R)-3-hydroxydecanoyl-ACP to E-(2)-decenoyl-ACP and then its isomerization to Z-(3)-decenoyl-ACP. Can catalyze the dehydratase reaction for beta-hydroxyacyl-ACPs with saturated chain lengths up to 16:0, being most active on intermediate chain length. The polypeptide is 3-hydroxydecanoyl-[acyl-carrier-protein] dehydratase (Hydrogenovibrio crunogenus (strain DSM 25203 / XCL-2) (Thiomicrospira crunogena)).